The sequence spans 135 residues: CDGSH iron-sulfur domain-containing protein 2B (135 aa).

Over 1–37 (MVLETISKIIKTQLPAYLKKFPLPETIGGFARLTVLD) the chain is Lumenal. Residues 38–60 (WLRLLPLLGILALLGYLTIRPFL) traverse the membrane as a helical segment. Residues 61–135 (PKKKKQKDSL…GPLILKKKIL (75 aa)) are Cytoplasmic-facing. Positions 99, 101, 110, and 114 each coordinate [2Fe-2S] cluster.

Belongs to the CISD protein family. CISD2 subfamily. As to quaternary structure, homodimer. Requires [2Fe-2S] cluster as cofactor.

The protein localises to the endoplasmic reticulum membrane. It localises to the mitochondrion outer membrane. Functionally, regulator of autophagy that contributes to antagonize becn1-mediated cellular autophagy at the endoplasmic reticulum. Participates in the interaction of bcl2 with becn1 and is required for bcl2-mediated depression of endoplasmic reticulum Ca(2+) stores during autophagy. The sequence is that of CDGSH iron-sulfur domain-containing protein 2B (cisd2b) from Salmo salar (Atlantic salmon).